The primary structure comprises 212 residues: Imidazole glycerol phosphate synthase subunit HisH (212 aa).

In terms of domain architecture, Glutamine amidotransferase type-1 spans methionine 1–lysine 211. Cysteine 79 acts as the Nucleophile in catalysis. Residues histidine 186 and glutamate 188 contribute to the active site.

As to quaternary structure, heterodimer of HisH and HisF.

It localises to the cytoplasm. The enzyme catalyses 5-[(5-phospho-1-deoxy-D-ribulos-1-ylimino)methylamino]-1-(5-phospho-beta-D-ribosyl)imidazole-4-carboxamide + L-glutamine = D-erythro-1-(imidazol-4-yl)glycerol 3-phosphate + 5-amino-1-(5-phospho-beta-D-ribosyl)imidazole-4-carboxamide + L-glutamate + H(+). It carries out the reaction L-glutamine + H2O = L-glutamate + NH4(+). It participates in amino-acid biosynthesis; L-histidine biosynthesis; L-histidine from 5-phospho-alpha-D-ribose 1-diphosphate: step 5/9. IGPS catalyzes the conversion of PRFAR and glutamine to IGP, AICAR and glutamate. The HisH subunit catalyzes the hydrolysis of glutamine to glutamate and ammonia as part of the synthesis of IGP and AICAR. The resulting ammonia molecule is channeled to the active site of HisF. In Bacillus velezensis (strain DSM 23117 / BGSC 10A6 / LMG 26770 / FZB42) (Bacillus amyloliquefaciens subsp. plantarum), this protein is Imidazole glycerol phosphate synthase subunit HisH.